We begin with the raw amino-acid sequence, 634 residues long: Sodium-dependent neutral amino acid transporter B(0)AT1 (634 aa).

Residues Met-1–Tyr-41 lie on the Cytoplasmic side of the membrane. Ser-17 carries the post-translational modification Phosphoserine. A helical membrane pass occupies residues Met-42–Cys-62. Residues Gln-63–His-65 lie on the Extracellular side of the membrane. Residues Gly-66 to Leu-86 form a helical membrane-spanning segment. At His-87–Met-119 the chain is on the cytoplasmic side. Residues Phe-120–Phe-140 form a helical membrane-spanning segment. At Phe-141 to Ser-192 the chain is on the extracellular side. 2 N-linked (GlcNAc...) asparagine glycosylation sites follow: Asn-158 and Asn-182. Residues Ile-193–Ile-213 traverse the membrane as a helical segment. Residues Arg-214–Lys-221 are Cytoplasmic-facing. Residues Ala-222–Leu-242 traverse the membrane as a helical segment. Residues Thr-243 to Trp-268 lie on the Extracellular side of the membrane. The N-linked (GlcNAc...) asparagine glycan is linked to Asn-258. The chain crosses the membrane as a helical span at residues Leu-269–Phe-289. Residues Ser-290 to Val-304 lie on the Cytoplasmic side of the membrane. A helical membrane pass occupies residues Ile-305 to Ile-325. Over Gly-326–Ser-413 the chain is Extracellular. 2 N-linked (GlcNAc...) asparagine glycosylation sites follow: Asn-354 and Asn-368. The chain crosses the membrane as a helical span at residues Pro-414 to Gly-434. Topologically, residues Asn-435 to Glu-456 are cytoplasmic. The helical transmembrane segment at Leu-457–Ser-477 threads the bilayer. The Extracellular portion of the chain corresponds to Gly-478–Gly-490. Residues Ser-491–Val-511 traverse the membrane as a helical segment. The Cytoplasmic portion of the chain corresponds to Asp-512–Gln-531. The chain crosses the membrane as a helical span at residues Val-532 to Ile-552. The Extracellular portion of the chain corresponds to Glu-553–Trp-581. A helical transmembrane segment spans residues Val-582–Ile-602. Topologically, residues Tyr-603–Asn-634 are cytoplasmic. Ser-627 carries the phosphoserine modification.

This sequence belongs to the sodium:neurotransmitter symporter (SNF) (TC 2.A.22) family. SLC6A19 subfamily. In terms of assembly, interacts in a tissue-specific manner with ACE2 in small intestine and with CLTRN in the kidney. Interacts with CLTRN; this interaction is required for trafficking of SLC6A19 to the plasma membrane and for its catalytic activation in kidneys. Interacts with ACE2; this interaction is required for trafficking of SLC6A19 to the plasma membrane and for its catalytic activation in intestine. Interacts with ANPEP; the interaction positively regulates its amino acid transporter activity.

It localises to the membrane. It catalyses the reaction L-alanine(in) + Na(+)(in) = L-alanine(out) + Na(+)(out). It carries out the reaction L-cysteine(in) + Na(+)(in) = L-cysteine(out) + Na(+)(out). The enzyme catalyses L-glutamine(in) + Na(+)(in) = L-glutamine(out) + Na(+)(out). The catalysed reaction is glycine(in) + Na(+)(in) = glycine(out) + Na(+)(out). It catalyses the reaction L-isoleucine(in) + Na(+)(in) = L-isoleucine(out) + Na(+)(out). It carries out the reaction L-leucine(in) + Na(+)(in) = L-leucine(out) + Na(+)(out). The enzyme catalyses L-methionine(in) + Na(+)(in) = L-methionine(out) + Na(+)(out). The catalysed reaction is L-phenylalanine(in) + Na(+)(in) = L-phenylalanine(out) + Na(+)(out). It catalyses the reaction L-serine(in) + Na(+)(in) = L-serine(out) + Na(+)(out). It carries out the reaction L-tryptophan(in) + Na(+)(in) = L-tryptophan(out) + Na(+)(out). The enzyme catalyses L-tyrosine(in) + Na(+)(in) = L-tyrosine(out) + Na(+)(out). The catalysed reaction is L-valine(in) + Na(+)(in) = L-valine(out) + Na(+)(out). Its function is as follows. Transporter that mediates resorption of neutral amino acids across the apical membrane of renal and intestinal epithelial cells. This uptake is sodium-dependent and chloride-independent. Requires CLTRN in kidney or ACE2 in intestine for cell surface expression and amino acid transporter activity. This is Sodium-dependent neutral amino acid transporter B(0)AT1 from Rattus norvegicus (Rat).